The sequence spans 66 residues: MPKQKTHRASAKRFKRTANGGLKRHHAYTGHRFHGKTKKQRRHLRKAAMVSASDLKRIKQMLSQMR.

The disordered stretch occupies residues 1–42; the sequence is MPKQKTHRASAKRFKRTANGGLKRHHAYTGHRFHGKTKKQRR.

Belongs to the bacterial ribosomal protein bL35 family.

This is Large ribosomal subunit protein bL35 from Lactobacillus gasseri (strain ATCC 33323 / DSM 20243 / BCRC 14619 / CIP 102991 / JCM 1131 / KCTC 3163 / NCIMB 11718 / NCTC 13722 / AM63).